Here is a 119-residue protein sequence, read N- to C-terminus: Ribonuclease (119 aa).

Residues Lys-6 and Arg-9 each contribute to the substrate site. The active-site Proton acceptor is His-11. 3 disulfide bridges follow: Cys-26-Cys-81, Cys-40-Cys-92, and Cys-58-Cys-107. Substrate-binding positions include 41 to 45 and Arg-82; that span reads KFTNT. Residue His-114 is the Proton donor of the active site.

This sequence belongs to the pancreatic ribonuclease family. As to quaternary structure, monomer. Interacts with and forms tight 1:1 complexes with RNH1. Dimerization of two such complexes may occur. Interaction with RNH1 inhibits this protein.

Its subcellular location is the secreted. The catalysed reaction is an [RNA] containing cytidine + H2O = an [RNA]-3'-cytidine-3'-phosphate + a 5'-hydroxy-ribonucleotide-3'-[RNA].. It carries out the reaction an [RNA] containing uridine + H2O = an [RNA]-3'-uridine-3'-phosphate + a 5'-hydroxy-ribonucleotide-3'-[RNA].. In terms of biological role, endonuclease that catalyzes the cleavage of RNA on the 3' side of pyrimidine nucleotides. Acts on single-stranded and double-stranded RNA. The sequence is that of Ribonuclease from Chelonia mydas (Green sea-turtle).